Reading from the N-terminus, the 64-residue chain is MILVHTGNVLYPRFIVVAFTFEQRQGGRCKGGKATCMASVQSYKVTMQISSMTIIYPLFIFFSL.

This is an uncharacterized protein from Saccharomyces cerevisiae (strain ATCC 204508 / S288c) (Baker's yeast).